Consider the following 1346-residue polypeptide: MDNKRDKAKAGAAARTPAARAPGLLTPRPPGSPRPPPPVTPAALRVLGAAGAVGRKPLAERAGGIGGATIPESAPRAGPTRSAGTSSRNPASRPPASGRGERAPPAKNTSPGPVSSPGRASGTTRPGPLGQKGLRISAEETVARGKATEAPKRSALSAGARRDTSGPTPGTPSPAMARRSRAAGTEVGLPRPAPSARPRPPTEGPRKSVSSASEHSTTEPSPAARRRPSAGGGLQRPASRSLSSSATPLSSPARSGPSARGTPRAPAHPSQPKPKGLQALRPPQVTPPRKDAAPALGPLSSSPLATPSPSGTKARPVPPPDNAATPLPATLPPSPPVTPPPPAALQSQAPPTLPATPHSSSLTCQLATPLPLAPPSPSAPPSLQTLPSPPATPPSQVPPTQLIMSFPEAGVSSLATAAFVASVSPSVSSPLQSMPPTQANPALPSLPTLLSPLATPPLSAMSPLQGPVSPATSLGNSAFPLAALPQPGLSALTTPPPQASPSPSPPSLQATPHTLATLPLQDSPLLATLPLQASPSPLTTVSLQDPPLVSPSLLASPPLQAPPHPQAPPSMTTPPMQAPPSLQTIPPIQVPHSLTSPSLQAPPSPLALSSLQATTSLGSPTLQATHSFLTMSPRQTQASLISPSRPASTPPDSPPLQAPLSLPASPPLQTSLSPAVSPLSSPLTIHPLQALSSLASHSPQAPLSSLIMPPLETQSSLAPPSLQTPPASLTTPPLENLPSLAPPPLQTASAPLTTPPLENLPSLAPPPLQTASAPLTTPHLETPPCPAPCPLQAPPSPLTTPPPETPSSIATPPPQAPPALASPPLQGLPSPPLSPLATPPPQAPPALALPPLQAPPSPPASPPLSPLATPSPQAPNALAVHLLQAPFSPPPSPPVQAPFSPPASPPVSPSATPPSQAPPSLAAPPLQVPPSPPASPPMSPSATPPPQAPPPLAAPPLQVPPSPPASPPMSPSATPPPRVPPLLAAPPLQVPPSPPASLPMSPLAKPPPQAPPALATPPLQALPSPPASFPGQAPFSPSASLPMSPLATPPPQAPPVLAAPLLQVPPSPPASPTLQAPRRPPTPGPDTSVSGPRLTLALAPGPPPPPSRSPSSTLSGPDLAGHSSSATSTPEELRGYDSGPEGGAAASPPPDAELAACHPAAWSRGPAPPLAFRGAPGAPLPWPPATGPGSADGLCTIYETEGPESATPAPGALDPGPSPGTSGGKAAAGAGAGASSRSPKQARLGELPLGALQASVVQHLLSRTLLLAAAEGAAGGSGGGPGGAEGGGVTGGARAALSDAELGRWAELLSPLDESRASITSVTSFSPDDVASPQGDWTVVEVETFH.

Disordered stretches follow at residues 1-403 (MDNK…TQLI), 426-512 (SVSS…QATP), 537-606 (PLTT…PSPL), 633-679 (PRQT…VSPL), 711-1155 (LETQ…AELA), and 1168-1240 (PPLA…RSPK). Residues 10–26 (AGAAARTPAARAPGLLT) are compositionally biased toward low complexity. Positions 27–40 (PRPPGSPRPPPPVT) are enriched in pro residues. 2 stretches are compositionally biased toward low complexity: residues 41 to 55 (PAAL…AVGR) and 86 to 97 (SSRNPASRPPAS). Basic and acidic residues predominate over residues 137–152 (SAEETVARGKATEAPK). A compositionally biased stretch (low complexity) spans 165–177 (SGPTPGTPSPAMA). The segment covering 191–203 (RPAPSARPRPPTE) has biased composition (pro residues). The segment covering 208-220 (SVSSASEHSTTEP) has biased composition (polar residues). Composition is skewed to low complexity over residues 235–255 (QRPA…PARS) and 293–312 (APAL…PSGT). 3 stretches are compositionally biased toward pro residues: residues 329–343 (ATLP…PPPA), 371–380 (PLAPPSPSAP), and 387–397 (PSPPATPPSQV). Residues 426-464 (SVSSPLQSMPPTQANPALPSLPTLLSPLATPPLSAMSPL) are compositionally biased toward low complexity. Positions 494–506 (TPPPQASPSPSPP) are enriched in pro residues. A compositionally biased stretch (low complexity) spans 546 to 558 (PPLVSPSLLASPP). Pro residues predominate over residues 559 to 578 (LQAPPHPQAPPSMTTPPMQA). Over residues 633–647 (PRQTQASLISPSRPA) the composition is skewed to polar residues. Pro residues predominate over residues 648-657 (STPPDSPPLQ). The segment covering 658 to 679 (APLSLPASPPLQTSLSPAVSPL) has biased composition (low complexity). Positions 724-733 (TPPASLTTPP) are enriched in polar residues. 2 stretches are compositionally biased toward pro residues: residues 781 to 821 (ETPP…PALA) and 829 to 865 (PSPP…PPLS). The segment covering 866–875 (PLATPSPQAP) has biased composition (low complexity). 3 stretches are compositionally biased toward pro residues: residues 887-917 (FSPP…PSQA), 926-997 (LQVP…PPAS), and 1004-1015 (AKPPPQAPPALA). 3 stretches are compositionally biased toward low complexity: residues 1029-1046 (FPGQ…MSPL), 1137-1146 (DSGPEGGAAA), and 1224-1239 (GKAA…SRSP). The residue at position 1310 (serine 1310) is a Phosphoserine.

The chain is Proline-rich protein 36 from Homo sapiens (Human).